Here is a 1703-residue protein sequence, read N- to C-terminus: Ferlin 2 (1703 aa).

C2 domains are found at residues 18–141 (IRKL…KTWL) and 207–332 (KQPV…FRWF). Disordered regions lie at residues 913–937 (NQFNDDDEGDNEDEQDSRENDFDDN), 970–1025 (NLDK…TSST), and 1194–1228 (KNKSNRSSMSLSMRSSIQSNTFKSSRKTSRSQKLG). A compositionally biased stretch (acidic residues) spans 916-928 (NDDDEGDNEDEQD). Over residues 979–991 (QPQSLKNLQNLDS) the composition is skewed to polar residues. A compositionally biased stretch (basic and acidic residues) spans 993 to 1009 (SKADQKSQFDLKSESKS). Low complexity predominate over residues 1198–1209 (NRSSMSLSMRSS). A C2 3 domain is found at 1466-1595 (VARIIPPSTI…LKKLKEGIVF (130 aa)). The segment at 1628–1651 (AAESDPVGEGQNEPNKDPILEKPK) is disordered. Positions 1641 to 1651 (PNKDPILEKPK) are enriched in basic and acidic residues. A helical transmembrane segment spans residues 1681-1701 (FAGIFVSIVTMMILFVKPGIL).

It belongs to the ferlin family.

The protein resides in the membrane. Functionally, regulates mucocyst exocytosis. This Tetrahymena thermophila (strain SB210) protein is Ferlin 2.